Here is an 838-residue protein sequence, read N- to C-terminus: Glycogen phosphorylase, brain form (838 aa).

A2 is subject to N-acetylalanine. S15 bears the Phosphoserine mark. Residues D43, Y197, and R310 each contribute to the AMP site. Position 197 is a phosphotyrosine (Y197). Y473 is modified (phosphotyrosine). S524 is modified (phosphoserine). K569 serves as a coordination point for pyridoxal 5'-phosphate. A pyridoxal 5'-phosphate region spans residues 677–678 (TG). K681 bears the N6-(pyridoxal phosphate)lysine mark.

The protein belongs to the glycogen phosphorylase family. In terms of assembly, homodimer. Dimers associate into a tetramer to form the enzymatically active phosphorylase A. Pyridoxal 5'-phosphate is required as a cofactor. In terms of processing, phosphorylation of Ser-15 converts phosphorylase B (unphosphorylated) to phosphorylase A.

The catalysed reaction is [(1-&gt;4)-alpha-D-glucosyl](n) + phosphate = [(1-&gt;4)-alpha-D-glucosyl](n-1) + alpha-D-glucose 1-phosphate. Activity of phosphorylase is controlled both by allosteric means (through the non-covalent binding of metabolites) and by covalent modification. Thus AMP allosterically activates, whereas ATP, ADP, and glucose-6-phosphate allosterically inhibit, phosphorylase B. In terms of biological role, glycogen phosphorylase that regulates glycogen mobilization. Phosphorylase is an important allosteric enzyme in carbohydrate metabolism. Enzymes from different sources differ in their regulatory mechanisms and in their natural substrates. However, all known phosphorylases share catalytic and structural properties. This is Glycogen phosphorylase, brain form (Pygb) from Rattus norvegicus (Rat).